Here is a 301-residue protein sequence, read N- to C-terminus: 2-dehydropantoate 2-reductase (301 aa).

NADP(+) contacts are provided by residues 11 to 16 (GAGAMG), Asn107, and Ala133. A substrate-binding site is contributed by Asn107. Catalysis depends on Lys187, which acts as the Proton donor. Residues Asn191, Asn195, Asn205, and Ser251 each contribute to the substrate site. NADP(+) is bound at residue Glu263.

The protein belongs to the ketopantoate reductase family.

Its subcellular location is the cytoplasm. The catalysed reaction is (R)-pantoate + NADP(+) = 2-dehydropantoate + NADPH + H(+). The protein operates within cofactor biosynthesis; (R)-pantothenate biosynthesis; (R)-pantoate from 3-methyl-2-oxobutanoate: step 2/2. In terms of biological role, catalyzes the NADPH-dependent reduction of ketopantoate into pantoic acid. The polypeptide is 2-dehydropantoate 2-reductase (Listeria innocua serovar 6a (strain ATCC BAA-680 / CLIP 11262)).